The sequence spans 277 residues: Undecaprenyl-diphosphatase (277 aa).

6 helical membrane-spanning segments follow: residues Leu53 to Gly73, Val85 to Ile105, Trp108 to Trp128, Ala183 to Ser203, Gly215 to Val235, and Phe250 to Val270.

It belongs to the UppP family.

The protein localises to the cell inner membrane. The enzyme catalyses di-trans,octa-cis-undecaprenyl diphosphate + H2O = di-trans,octa-cis-undecaprenyl phosphate + phosphate + H(+). In terms of biological role, catalyzes the dephosphorylation of undecaprenyl diphosphate (UPP). Confers resistance to bacitracin. This Azotobacter vinelandii (strain DJ / ATCC BAA-1303) protein is Undecaprenyl-diphosphatase.